The primary structure comprises 695 residues: UvrABC system protein B (695 aa).

Positions 31–414 (EGIESGLSFQ…EIQRSGQIAE (384 aa)) constitute a Helicase ATP-binding domain. ATP is bound at residue 44-51 (GVTGSGKT). The short motif at 97–120 (YYDYYQPEAYVPSRDLFIEKDSSI) is the Beta-hairpin element. The Helicase C-terminal domain maps to 435–601 (QVDDLMSEVS…GVNKRIKDLI (167 aa)). Residues 632-667 (AKEIQRLEKSMLEAARNMEFEQAAQYRDEIKNLRSK) form the UVR domain.

It belongs to the UvrB family. In terms of assembly, forms a heterotetramer with UvrA during the search for lesions. Interacts with UvrC in an incision complex.

The protein resides in the cytoplasm. The UvrABC repair system catalyzes the recognition and processing of DNA lesions. A damage recognition complex composed of 2 UvrA and 2 UvrB subunits scans DNA for abnormalities. Upon binding of the UvrA(2)B(2) complex to a putative damaged site, the DNA wraps around one UvrB monomer. DNA wrap is dependent on ATP binding by UvrB and probably causes local melting of the DNA helix, facilitating insertion of UvrB beta-hairpin between the DNA strands. Then UvrB probes one DNA strand for the presence of a lesion. If a lesion is found the UvrA subunits dissociate and the UvrB-DNA preincision complex is formed. This complex is subsequently bound by UvrC and the second UvrB is released. If no lesion is found, the DNA wraps around the other UvrB subunit that will check the other stand for damage. In Nitrosomonas europaea (strain ATCC 19718 / CIP 103999 / KCTC 2705 / NBRC 14298), this protein is UvrABC system protein B.